Consider the following 207-residue polypeptide: Alpha-1-acid glycoprotein 2 (207 aa).

A signal peptide spans 1 to 18 (MALHMILVMVSLLPLLEA). Glutamine 19 carries the pyrrolidone carboxylic acid modification. Asparagine 25, asparagine 34, asparagine 76, asparagine 94, and asparagine 104 each carry an N-linked (GlcNAc...) asparagine glycan. Cysteine 91 and cysteine 184 form a disulfide bridge. The interval 188-207 (EKQQLELEKETKKDPEEGQA) is disordered.

It belongs to the calycin superfamily. Lipocalin family. In terms of tissue distribution, expressed by the liver and secreted in plasma.

The protein resides in the secreted. Functions as a transport protein in the blood stream. Binds various ligands in the interior of its beta-barrel domain. Appears to function in modulating the activity of the immune system during the acute-phase reaction. This is Alpha-1-acid glycoprotein 2 (Orm2) from Mus musculus (Mouse).